The chain runs to 194 residues: Probable GTP-binding protein EngB (194 aa).

The EngB-type G domain occupies 22–194 (GKPEIALVGR…SVWEWITAHM (173 aa)). GTP-binding positions include 30–37 (GRSNVGKS), 57–61 (GKTQT), 75–78 (DVPG), 142–145 (TKSD), and 175–177 (FSS). Ser-37 and Thr-59 together coordinate Mg(2+).

Belongs to the TRAFAC class TrmE-Era-EngA-EngB-Septin-like GTPase superfamily. EngB GTPase family. Requires Mg(2+) as cofactor.

Functionally, necessary for normal cell division and for the maintenance of normal septation. The polypeptide is Probable GTP-binding protein EngB (Leuconostoc citreum (strain KM20)).